Reading from the N-terminus, the 37-residue chain is MKTIELITIFAMITTLMVTVVAGDPIDPKVLESLVGK.

The first 23 residues, 1 to 23, serve as a signal peptide directing secretion; it reads MKTIELITIFAMITTLMVTVVAG. Residues 24–25 constitute a propeptide that is removed on maturation; the sequence is DP. V35 carries the valine amide modification.

Expressed by the venom gland.

It is found in the secreted. In terms of biological role, toxin that induces mild paralysis, and reduces survival and reproduction when injected into aphids (A.pisum). May affect various processes in the aphid, including wound healing and hemolymph coagulation. It does not increase the sensitivity of the aphids to the chemical insecticides imidacloprid, methomyl and Spirotetramat. Has no insecticidal activity when injected into blowfly (L.caesar). Does not display any antibacterial or antifungal activity. The sequence is that of U12-myrmicitoxin-Mri1a from Manica rubida (European giant red ant).